A 346-amino-acid polypeptide reads, in one-letter code: N-acetyl-gamma-glutamyl-phosphate reductase (346 aa).

Residue cysteine 149 is part of the active site.

It belongs to the NAGSA dehydrogenase family. Type 1 subfamily.

It localises to the cytoplasm. It catalyses the reaction N-acetyl-L-glutamate 5-semialdehyde + phosphate + NADP(+) = N-acetyl-L-glutamyl 5-phosphate + NADPH + H(+). It participates in amino-acid biosynthesis; L-arginine biosynthesis; N(2)-acetyl-L-ornithine from L-glutamate: step 3/4. In terms of biological role, catalyzes the NADPH-dependent reduction of N-acetyl-5-glutamyl phosphate to yield N-acetyl-L-glutamate 5-semialdehyde. The sequence is that of N-acetyl-gamma-glutamyl-phosphate reductase from Pelobacter propionicus (strain DSM 2379 / NBRC 103807 / OttBd1).